The chain runs to 445 residues: N-succinylarginine dihydrolase (445 aa).

Residues 19-28 (AGLSFGNVAS), asparagine 110, and 137-138 (HR) contribute to the substrate site. Glutamate 174 is a catalytic residue. Residue arginine 214 participates in substrate binding. Residue histidine 250 is part of the active site. Substrate-binding residues include aspartate 252 and asparagine 363. Cysteine 369 acts as the Nucleophile in catalysis.

Belongs to the succinylarginine dihydrolase family. As to quaternary structure, homodimer.

It carries out the reaction N(2)-succinyl-L-arginine + 2 H2O + 2 H(+) = N(2)-succinyl-L-ornithine + 2 NH4(+) + CO2. The protein operates within amino-acid degradation; L-arginine degradation via AST pathway; L-glutamate and succinate from L-arginine: step 2/5. In terms of biological role, catalyzes the hydrolysis of N(2)-succinylarginine into N(2)-succinylornithine, ammonia and CO(2). The polypeptide is N-succinylarginine dihydrolase (Shewanella piezotolerans (strain WP3 / JCM 13877)).